The chain runs to 204 residues: B9 domain-containing protein 1 (204 aa).

The 119-residue stretch at 9–127 (FLLMVNGQVE…TIPMFVPEST (119 aa)) folds into the C2 B9-type domain. A disordered region spans residues 182-204 (GYDTGPSDTQGVLGPSPPQSFPQ).

This sequence belongs to the B9D family. In terms of assembly, part of the tectonic-like complex (also named B9 complex).

The protein resides in the cytoplasm. Its subcellular location is the cytoskeleton. It is found in the cilium basal body. It localises to the cilium axoneme. In terms of biological role, component of the tectonic-like complex, a complex localized at the transition zone of primary cilia and acting as a barrier that prevents diffusion of transmembrane proteins between the cilia and plasma membranes. Required for ciliogenesis and sonic hedgehog/SHH signaling. This is B9 domain-containing protein 1 (B9D1) from Homo sapiens (Human).